Consider the following 440-residue polypeptide: 5-methylthioadenosine/S-adenosylhomocysteine deaminase (440 aa).

Zn(2+) contacts are provided by H69 and H71. Substrate contacts are provided by E98 and H190. H217 is a Zn(2+) binding site. Substrate-binding residues include E220 and D305. Residue D305 coordinates Zn(2+).

It belongs to the metallo-dependent hydrolases superfamily. MTA/SAH deaminase family. Requires Zn(2+) as cofactor.

The catalysed reaction is S-adenosyl-L-homocysteine + H2O + H(+) = S-inosyl-L-homocysteine + NH4(+). It carries out the reaction S-methyl-5'-thioadenosine + H2O + H(+) = S-methyl-5'-thioinosine + NH4(+). In terms of biological role, catalyzes the deamination of 5-methylthioadenosine and S-adenosyl-L-homocysteine into 5-methylthioinosine and S-inosyl-L-homocysteine, respectively. Is also able to deaminate adenosine. In Desulfovibrio desulfuricans (strain ATCC 27774 / DSM 6949 / MB), this protein is 5-methylthioadenosine/S-adenosylhomocysteine deaminase.